The sequence spans 259 residues: MKRICLLALITTMSGCAMLEPIETDEVTQATTVVDAVEGDKSKDESSGIVDTLRGRNDPVAGDPAWAPIHPKQKPEHYAAATGSLFSPEHITDLYDDSKPRGIGDIITVTLDETTSATKSANADLSKTNEAQMDPLQVGGEELKVGGKYNFSYDLNNTNTFAGDSSAKQSNSISGYITVEVIEVLANGNLVIRGEKWMTLNTGDEYIRLSGTIRPDDINFDNTIASNRVSNARIQYSGTGLSQDMQEPGFLARFFNVAL.

An N-terminal signal peptide occupies residues 1–15 (MKRICLLALITTMSG). The N-palmitoyl cysteine moiety is linked to residue Cys16. The S-diacylglycerol cysteine moiety is linked to residue Cys16. Residues 38-63 (EGDKSKDESSGIVDTLRGRNDPVAGD) form a disordered region.

The protein belongs to the FlgH family. As to quaternary structure, the basal body constitutes a major portion of the flagellar organelle and consists of four rings (L,P,S, and M) mounted on a central rod.

It localises to the cell outer membrane. Its subcellular location is the bacterial flagellum basal body. Assembles around the rod to form the L-ring and probably protects the motor/basal body from shearing forces during rotation. This chain is Flagellar L-ring protein 1 (flgH1), found in Vibrio parahaemolyticus serotype O3:K6 (strain RIMD 2210633).